We begin with the raw amino-acid sequence, 273 residues long: Homeobox protein HMX2 (273 aa).

The segment at 1 to 154 (MGSKEDVGKG…TGAAKKKTRT (154 aa)) is disordered. A compositionally biased stretch (basic and acidic residues) spans 114-123 (PDFKEEKERL). The segment at residues 149–208 (KKKTRTVFSRSQVYQLESTFDMKRYLSSSERACLASSLQLTETQVKTWFQNRRNKWKRQL) is a DNA-binding region (homeobox).

This sequence belongs to the HMX homeobox family. In terms of tissue distribution, expressed in the developing CNS, including a specific expression in vestibular structures throughout inner ear development.

The protein localises to the nucleus. In terms of biological role, transcription factor involved in specification of neuronal cell types and which is required for inner ear and hypothalamus development. The polypeptide is Homeobox protein HMX2 (Hmx2) (Mus musculus (Mouse)).